A 146-amino-acid polypeptide reads, in one-letter code: MVMGLGLFLLVFMLGLGLTPPTLAQDNPRYRDFLAKHYDATPQGRNDRYCESTMRRRHLTSPCKDINTFVHGNRHHITAICGDENGSPYGGNLRISTSPFQVTTCKLRGGSPRPPCQYRATRGSRNIVVGCENGLPVHLDESIFRP.

Residues 1-24 (MVMGLGLFLLVFMLGLGLTPPTLA) form the signal peptide. Gln-25 carries the pyrrolidone carboxylic acid modification. His-37 serves as the catalytic Proton acceptor. Arg-45 lines the tRNA pocket. Disulfide bonds link Cys-50-Cys-105, Cys-63-Cys-116, and Cys-81-Cys-131. The short motif at 55 to 59 (RRRHL) is the Nucleolar localization signal element. TRNA contacts are provided by Cys-105 and Ile-127. Residue His-138 is the Proton donor of the active site.

The protein belongs to the pancreatic ribonuclease family. Homodimer. Interacts with RNH1; inhibiting ANG ribonuclease activity. Interacts with PCNA.

The protein localises to the secreted. The protein resides in the nucleus. It is found in the nucleolus. Its subcellular location is the cytoplasm. It localises to the stress granule. With respect to regulation, has weak tRNA ribonuclease activity by itself due to partial autoinhibition by its C-terminus, which folds into a short alpha-helix that partially occludes the substrate-binding site. In absence of stress, the ribonuclease activity is inhibited by RNH1 in the cytoplasm. In response to stress, dissociates from RNH1 in the cytoplasm and associates with cytoplasmic ribosomes with vacant A-sites: ribosomes directly activate the tRNA ribonuclease activity of ANG by refolding the C-terminal alpha-helix. In response to stress, the angiogenic activity of ANG is inhibited by RNH1 in the nucleus. Functionally, secreted ribonuclease that can either promote or restrict cell proliferation of target cells, depending on the context. Endocytosed in target cells via its receptor PLXNB2 and translocates to the cytoplasm or nucleus. Under stress conditions, localizes to the cytoplasm and promotes the assembly of stress granules (SGs): specifically cleaves a subset of tRNAs within anticodon loops to produce tRNA-derived stress-induced fragments (tiRNAs), resulting in translation repression and inhibition of cell proliferation. tiRNas also prevent formation of apoptosome, thereby promoting cell survival. Preferentially cleaves RNAs between a pyrimidine and an adenosine residue, suggesting that it cleaves the anticodon loop of tRNA(Ala) (32-UUAGCAU-38) after positions 33 and 36. Cleaves a subset of tRNAs, including tRNA(Ala), tRNA(Glu), tRNA(Gly), tRNA(Lys), tRNA(Val), tRNA(His), tRNA(Asp) and tRNA(Sec). Under growth conditions and in differentiated cells, translocates to the nucleus and stimulates ribosomal RNA (rRNA) transcription, including that containing the initiation site sequences of 45S rRNA, thereby promoting cell growth and proliferation. Angiogenin induces vascularization of normal and malignant tissues via its ability to promote rRNA transcription. Involved in hematopoietic stem and progenitor cell (HSPC) growth and survival by promoting rRNA transcription in growth conditions and inhibiting translation in response to stress, respectively. Mediates the crosstalk between myeloid and intestinal epithelial cells to protect the intestinal epithelial barrier integrity: secreted by myeloid cells and promotes intestinal epithelial cells proliferation and survival. Also mediates osteoclast-endothelial cell crosstalk in growing bone: produced by osteoclasts and protects the neighboring vascular cells against senescence by promoting rRNA transcription. This is Angiogenin (ANG) from Macaca mulatta (Rhesus macaque).